We begin with the raw amino-acid sequence, 254 residues long: Switch-activating protein 1 (254 aa).

Residues 1-10 show a composition bias toward basic and acidic residues; that stretch reads MEAPKMELKS. Residues 1 to 30 are disordered; that stretch reads MEAPKMELKSYKRKNASLSPSSSPAKAQRT. A compositionally biased stretch (low complexity) spans 16–25; it reads ASLSPSSSPA. 2 positions are modified to phosphoserine: Ser-17 and Ser-19. 4 consecutive repeat copies span residues 221-224, 225-228, 229-232, and 233-236. Positions 221–236 are 4 X 4 AA tandem repeats of G-[ATV]-N-M; that stretch reads GVNMGTNMGANMGANM.

In terms of assembly, homodimer.

The protein localises to the nucleus. In terms of biological role, binds to sequences required for mating-type switching. Makes a simultaneous contact with both the alpha and beta domains of the switch-activating site SAS1. Also binds to replication fork barrier 1 (RFB1) located within a 78 base pair sequence near the 3' end of the rRNA coding region. This leads to replication fork blockage. It binds the consensus sequence 5'-TA[AG]GCAGNTN[CT]AACG[AC]G-3'. Its function is as follows. Has a role in chromosome organization and integrity where it is involved in chromosome segregation. Has a role in sister chromatid cohesion and condensation. The polypeptide is Switch-activating protein 1 (sap1) (Schizosaccharomyces pombe (strain 972 / ATCC 24843) (Fission yeast)).